The primary structure comprises 115 residues: ATP synthase subunits region ORF 7 (115 aa).

This Fuscovulum blasticum (Rhodobacter blasticus) protein is ATP synthase subunits region ORF 7.